The following is an 877-amino-acid chain: Putative leucine-rich repeat receptor-like serine/threonine-protein kinase At2g19230 (877 aa).

The N-terminal stretch at 1–24 (MGNFNFLPLVSFASFVVVLVLVCA) is a signal peptide. Over 25 to 517 (QDQSGFVSID…RNKKTERKEY (493 aa)) the chain is Extracellular. 6 N-linked (GlcNAc...) asparagine glycosylation sites follow: asparagine 142, asparagine 233, asparagine 261, asparagine 295, asparagine 405, and asparagine 420. LRR repeat units lie at residues 439 to 462 (PLQKLDLSNNRLTGTVPDFLANLP) and 463 to 484 (DLTELNLEENKLTGILPEKLLE). The helical transmembrane segment at 518–538 (IIPSVASVTGLFFLLLALISF) threads the bilayer. Residues 539–877 (WQFKKRQQSV…VDPGVLPQPR (339 aa)) are Cytoplasmic-facing. Residues 569-842 (NNFERVLGQG…QVVAELKESL (274 aa)) enclose the Protein kinase domain. ATP is bound by residues 575 to 583 (LGQGGFGKV) and lysine 596. Position 641 is a phosphotyrosine (tyrosine 641). Aspartate 692 (proton acceptor) is an active-site residue. The residue at position 726 (serine 726) is a Phosphoserine. Phosphothreonine occurs at positions 727 and 732.

The protein belongs to the protein kinase superfamily. Ser/Thr protein kinase family.

Its subcellular location is the cell membrane. It carries out the reaction L-seryl-[protein] + ATP = O-phospho-L-seryl-[protein] + ADP + H(+). The catalysed reaction is L-threonyl-[protein] + ATP = O-phospho-L-threonyl-[protein] + ADP + H(+). This Arabidopsis thaliana (Mouse-ear cress) protein is Putative leucine-rich repeat receptor-like serine/threonine-protein kinase At2g19230.